Here is a 254-residue protein sequence, read N- to C-terminus: Imidazole glycerol phosphate synthase subunit HisF (254 aa).

Residues Asp-11 and Asp-130 contribute to the active site.

The protein belongs to the HisA/HisF family. As to quaternary structure, heterodimer of HisH and HisF.

It is found in the cytoplasm. The catalysed reaction is 5-[(5-phospho-1-deoxy-D-ribulos-1-ylimino)methylamino]-1-(5-phospho-beta-D-ribosyl)imidazole-4-carboxamide + L-glutamine = D-erythro-1-(imidazol-4-yl)glycerol 3-phosphate + 5-amino-1-(5-phospho-beta-D-ribosyl)imidazole-4-carboxamide + L-glutamate + H(+). Its pathway is amino-acid biosynthesis; L-histidine biosynthesis; L-histidine from 5-phospho-alpha-D-ribose 1-diphosphate: step 5/9. In terms of biological role, IGPS catalyzes the conversion of PRFAR and glutamine to IGP, AICAR and glutamate. The HisF subunit catalyzes the cyclization activity that produces IGP and AICAR from PRFAR using the ammonia provided by the HisH subunit. This Trichlorobacter lovleyi (strain ATCC BAA-1151 / DSM 17278 / SZ) (Geobacter lovleyi) protein is Imidazole glycerol phosphate synthase subunit HisF.